Consider the following 936-residue polypeptide: Protocadherin alpha-5 (936 aa).

Residues 1–28 form the signal peptide; the sequence is MVYSRRGSLGSRLLLLWLLLAYWKAGSG. Over 29–696 the chain is Extracellular; it reads QLHYSIPEEA…GPEAALVDVN (668 aa). 6 Cadherin domains span residues 33 to 132, 156 to 241, 242 to 349, 350 to 454, 455 to 564, and 580 to 677; these read SIPE…PPRF, ASDL…APEF, DKSI…TPEM, AITT…APAF, AQPQ…APAL, and VPRS…APKA. The N-linked (GlcNAc...) asparagine glycan is linked to N264. N-linked (GlcNAc...) asparagine glycosylation occurs at N547. A helical transmembrane segment spans residues 697-717; the sequence is VYLIIAICAVSSLLVLTLLLY. Over 718–936 the chain is Cytoplasmic; it reads TALRCSAQPT…GNSTTDNSDQ (219 aa). 2 disordered regions span residues 759 to 793 and 816 to 936; these read SGEAPPKTDLMAFSPSLPQGPTSTDNPRQPNPDWR and AGPG…NSDQ. PXXP repeat units follow at residues 773-776, 785-788, 818-821, 873-876, and 877-890; these read PSLP, PRQP, PGGP, KFII, and PGSPAIISIRQEPT. The tract at residues 773 to 890 is 5 X 4 AA repeats of P-X-X-P; sequence PSLPQGPTST…AIISIRQEPT (118 aa). Polar residues predominate over residues 774-786; that stretch reads SLPQGPTSTDNPR. Positions 895 to 909 are enriched in basic and acidic residues; the sequence is DKSDFITFGKKEETK.

The protein localises to the cell membrane. Functionally, potential calcium-dependent cell-adhesion protein. May be involved in the establishment and maintenance of specific neuronal connections in the brain. The chain is Protocadherin alpha-5 (PCDHA5) from Homo sapiens (Human).